We begin with the raw amino-acid sequence, 118 residues long: Large ribosomal subunit protein uL18 (118 aa).

Residues 1-10 (MKTTRRDATR) are compositionally biased toward basic and acidic residues. The segment at 1 to 20 (MKTTRRDATRSRHQRVRRKV) is disordered. A compositionally biased stretch (basic residues) spans 11–20 (SRHQRVRRKV).

It belongs to the universal ribosomal protein uL18 family. Part of the 50S ribosomal subunit; part of the 5S rRNA/L5/L18/L25 subcomplex. Contacts the 5S and 23S rRNAs.

Functionally, this is one of the proteins that bind and probably mediate the attachment of the 5S RNA into the large ribosomal subunit, where it forms part of the central protuberance. This is Large ribosomal subunit protein uL18 from Acaryochloris marina (strain MBIC 11017).